The primary structure comprises 166 residues: Prorelaxin H2 (166 aa).

Residues 1-5 form the signal peptide; sequence SRAVA. Intrachain disulfides connect C16–C153, C28–C166, and C152–C157. Residues 37–138 constitute a propeptide, connecting peptide; the sequence is SLSQEDAPQT…LKYLGLDTHS (102 aa).

The protein belongs to the insulin family. Heterodimer of a B chain and an A chain linked by two disulfide bonds. In terms of tissue distribution, expressed in the corpus luteum of pregnancy and in the placenta.

It is found in the secreted. Relaxin is an ovarian hormone that acts with estrogen to produce dilatation of the birth canal in many mammals. May be involved in remodeling of connective tissues during pregnancy, promoting growth of pubic ligaments and ripening of the cervix. In Pan troglodytes (Chimpanzee), this protein is Prorelaxin H2 (RNL2).